A 446-amino-acid polypeptide reads, in one-letter code: MSKEYLTVSALTKYLHTKFTRDPYLRRVYLTGEISNFRRRATHQYFSLKDDNAVISVMMFQSAFSKIKFEPEKGMKVLVSGRVDLYEKSGRYQIIIDTMQPDGVGALYQAYEQLVKKLRIEGLFNEELKKPLVKYPKRIAVITSPSGAVIRDIITTTHRRYPIAQLVLFPAVVQGDDAADSLVGRLKQVNEEGNFDTIIIGRGGGSIEDLWPFNEEKVARAISDSKIPVISSVGHETDTTIADLVADVRAATPTAAAELATPVLSEEIVKIKQYRLRIIQVLKNKISNYQQILDKVCSSYILQQPDRLYTGYAQNLDSLINRKNQAFKNLVYQNEKQLQLLESNLQHNNPSIRIKDEKNNLQQLLEKMHLGMLGVFNDKSYKLEKLMSSLDMLSPLKVMNRGYSYILKDGKTVKNVKSLQPNDDVTLYFENGSAEARITKIREEKE.

This sequence belongs to the XseA family. As to quaternary structure, heterooligomer composed of large and small subunits.

The protein resides in the cytoplasm. The catalysed reaction is Exonucleolytic cleavage in either 5'- to 3'- or 3'- to 5'-direction to yield nucleoside 5'-phosphates.. Functionally, bidirectionally degrades single-stranded DNA into large acid-insoluble oligonucleotides, which are then degraded further into small acid-soluble oligonucleotides. The sequence is that of Exodeoxyribonuclease 7 large subunit from Ligilactobacillus salivarius (strain UCC118) (Lactobacillus salivarius).